We begin with the raw amino-acid sequence, 209 residues long: Inducible T-cell costimulator (209 aa).

Positions 1-19 (MKSDLRYFFLFCIQVEILA) are cleaved as a signal peptide. The Extracellular portion of the chain corresponds to 20–141 (GEFNDSAASE…YESELCCQLK (122 aa)). A glycan (N-linked (GlcNAc...) asparagine) is linked at Asn23. The 104-residue stretch at 30–133 (MFIFHNGGVQ…LSREYLNIYE (104 aa)) folds into the Ig-like V-type domain. 2 disulfides stabilise this stretch: Cys42/Cys109 and Cys63/Cys83. N-linked (GlcNAc...) asparagine glycosylation occurs at Asn89. The chain crosses the membrane as a helical span at residues 142 to 162 (FWLPIGCAAFVTVCVFGCVLM).

In terms of assembly, homodimer; disulfide-linked. Interacts with ICOSLG. Interacts with PIK3R1. Interacts with TBK1; this interaction is critical for the maturation of T follicular regulatory cells. N-glycosylated.

It localises to the cell membrane. Functionally, stimulatory receptor expressed in activated or antigen-experienced T-cells that plays an important role in the immune response. Upon binding to its ligand ICOSL expressed on antigen presenting cells (APCs), delivers costimulatory signals that enhances all basic T-cell responses to a foreign antigen, namely proliferation, secretion of lymphokines including IL10, up-regulation of molecules that mediate cell-cell interaction, and effective help for antibody secretion by B-cells. Also acts as a costimulatory receptor critical for the differentiation of T follicular regulatory cells upon immune challenges such as viral infection. Mechanistically, potentiates TCR-induced calcium flux by augmenting PLCG1 activation and actin remodeling. In addition, activates PI3K signaling pathways independently of calcium flux. Essential both for efficient interaction between T and B-cells and for normal antibody responses to T-cell dependent antigens. Prevents the apoptosis of pre-activated T-cells. Plays a critical role in CD40-mediated class switching of immunoglobin isotypes. This chain is Inducible T-cell costimulator (ICOS), found in Bos taurus (Bovine).